The primary structure comprises 86 residues: Putative membrane protein insertion efficiency factor (86 aa).

This sequence belongs to the UPF0161 family.

The protein localises to the cell inner membrane. Functionally, could be involved in insertion of integral membrane proteins into the membrane. This is Putative membrane protein insertion efficiency factor from Pseudomonas aeruginosa (strain LESB58).